Reading from the N-terminus, the 412-residue chain is Argininosuccinate synthase (412 aa).

10 to 18 (AYSGGLDTS) lines the ATP pocket. Tyr89 serves as a coordination point for L-citrulline. Residue Gly119 participates in ATP binding. L-aspartate is bound by residues Thr121, Asn125, and Asp126. Asn125 serves as a coordination point for L-citrulline. L-citrulline is bound by residues Arg129, Ser177, Glu261, and Tyr273.

Belongs to the argininosuccinate synthase family. Type 1 subfamily. In terms of assembly, homotetramer.

It is found in the cytoplasm. The catalysed reaction is L-citrulline + L-aspartate + ATP = 2-(N(omega)-L-arginino)succinate + AMP + diphosphate + H(+). It participates in amino-acid biosynthesis; L-arginine biosynthesis; L-arginine from L-ornithine and carbamoyl phosphate: step 2/3. This is Argininosuccinate synthase from Bifidobacterium longum (strain DJO10A).